The chain runs to 133 residues: Mediator of RNA polymerase II transcription subunit 10 (133 aa).

Positions 1–13 (MSTEASTGETPEF) are enriched in polar residues. The segment at 1 to 28 (MSTEASTGETPEFQSYDHRGSPTQEAMK) is disordered. Over residues 15 to 28 (SYDHRGSPTQEAMK) the composition is skewed to basic and acidic residues.

It belongs to the Mediator complex subunit 10 family. In terms of assembly, component of the Mediator complex.

The protein resides in the nucleus. Its function is as follows. Component of the Mediator complex, a coactivator involved in the regulated transcription of nearly all RNA polymerase II-dependent genes. Mediator functions as a bridge to convey information from gene-specific regulatory proteins to the basal RNA polymerase II transcription machinery. Mediator is recruited to promoters by direct interactions with regulatory proteins and serves as a scaffold for the assembly of a functional preinitiation complex with RNA polymerase II and the general transcription factors. This is Mediator of RNA polymerase II transcription subunit 10 (NUT2) from Phaeosphaeria nodorum (strain SN15 / ATCC MYA-4574 / FGSC 10173) (Glume blotch fungus).